The sequence spans 118 residues: Vesicle-associated membrane protein 1 (118 aa).

The tract at residues 1–36 (MSAPAQPPAEGTEGTAPGGGPPGPPPNMTSNRRLQQ) is disordered. Over 1 to 96 (MSAPAQPPAE…KRKYWWKNCK (96 aa)) the chain is Cytoplasmic. The region spanning 33 to 93 (RLQQTQAQVE…AKLKRKYWWK (61 aa)) is the v-SNARE coiled-coil homology domain. Serine 63 carries the post-translational modification Phosphoserine. The chain crosses the membrane as a helical; Anchor for type IV membrane protein span at residues 97–116 (MMIMLGAICAIIVVVIVIYF). Residues 117–118 (FT) are Vesicular-facing.

This sequence belongs to the synaptobrevin family. In terms of assembly, interacts with VAPA and VAPB. Post-translationally, (Microbial infection) Targeted and hydrolyzed by C.botulinum neurotoxin type B (BoNT/B, botB) which probably hydrolyzes the 78-Gln-|-Phe-79 bond and inhibits neurotransmitter release. (Microbial infection) Targeted and hydrolyzed by C.botulinum neurotoxin type D (BoNT/D, botD) which probably hydrolyzes the 61-Arg-|-Leu-62 bond and inhibits neurotransmitter release. BoNT/D has low catalytic activity on this protein due to its sequence. Note that humans are not known to be infected by C.botulinum type D. In terms of processing, (Microbial infection) Targeted and hydrolyzed by C.botulinum neurotoxin type F (BoNT/F, botF) which probably hydrolyzes the 60-Gln-|-Lys-61 bond and inhibits neurotransmitter release. Post-translationally, (Microbial infection) Targeted and hydrolyzed by C.botulinum neurotoxin type X (BoNT/X) which probably hydrolyzes the 68-Arg-|-Ala-69 bond and inhibits neurotransmitter release. It remains unknown whether BoNT/X is ever produced, or what organisms it targets. Nervous system, skeletal muscle and adipose tissue.

Its subcellular location is the cytoplasmic vesicle. The protein resides in the secretory vesicle. It is found in the synaptic vesicle membrane. It localises to the synapse. The protein localises to the synaptosome. Its subcellular location is the cytoplasmic vesicle membrane. The protein resides in the mitochondrion outer membrane. Its function is as follows. Involved in the targeting and/or fusion of transport vesicles to their target membrane. This is Vesicle-associated membrane protein 1 (VAMP1) from Homo sapiens (Human).